Reading from the N-terminus, the 578-residue chain is Phosphoenolpyruvate-protein phosphotransferase (578 aa).

The active-site Tele-phosphohistidine intermediate is histidine 195. 2 residues coordinate phosphoenolpyruvate: arginine 302 and arginine 338. Residues glutamate 437 and aspartate 461 each contribute to the Mg(2+) site. Phosphoenolpyruvate contacts are provided by residues 460-461 and arginine 471; that span reads ND. Residue cysteine 508 is the Proton donor of the active site.

This sequence belongs to the PEP-utilizing enzyme family. Homodimer. The cofactor is Mg(2+).

It is found in the cytoplasm. The catalysed reaction is L-histidyl-[protein] + phosphoenolpyruvate = N(pros)-phospho-L-histidyl-[protein] + pyruvate. General (non sugar-specific) component of the phosphoenolpyruvate-dependent sugar phosphotransferase system (sugar PTS). This major carbohydrate active-transport system catalyzes the phosphorylation of incoming sugar substrates concomitantly with their translocation across the cell membrane. Enzyme I transfers the phosphoryl group from phosphoenolpyruvate (PEP) to the phosphoryl carrier protein (HPr). This is Phosphoenolpyruvate-protein phosphotransferase (ptsI) from Bacillus sp. (strain S).